We begin with the raw amino-acid sequence, 261 residues long: Caveolae-associated protein 3 (261 aa).

The segment at 1–84 is interaction with CAVIN1; sequence MRESALERGP…SNTLAQLLAK (84 aa). Residues 20–78 form a leucine-zipper region; sequence VHAVTVVTLLEKLASMLETLRERQGGLARRQGGLAGSVRRIQSGLGALSRSHDTTSNTL. Ser-62 and Ser-70 each carry phosphoserine. Residue Lys-128 forms a Glycyl lysine isopeptide (Lys-Gly) (interchain with G-Cter in SUMO2) linkage. Residues 135 to 203 form an interaction with CAV1 region; sequence ASAFQKAPEP…SGRKGPAAPP (69 aa). Positions 139–261 are disordered; it reads QKAPEPLGPA…EALLQMESVA (123 aa). Residues 158 to 170 show a composition bias toward acidic residues; that stretch reads LEAEVGESSDEEP. Phosphoserine is present on residues Ser-165, Ser-166, and Ser-173. The span at 200–212 shows a compositional bias: pro residues; it reads AAPPPTPVKPPRL. A compositionally biased stretch (low complexity) spans 213 to 231; that stretch reads GPGRSAEAQPEAQPALEPT.

Belongs to the CAVIN family. Component of the CAVIN complex composed of CAVIN1, CAVIN2, CAVIN3 and CAVIN4. Interacts with PRKCD and with phosphatidylserine. Phosphatidylserine may form a bridge between PKC and PKC-binding partners and stabilize the binding. Interacts with PER2. Interacts with CAVIN1. Interacts (via leucine-zipper domain) with CAV1 in a cholesterol-sensitive manner. Interacts with EPS15L1. Post-translationally, in vitro, phosphorylated by PRKCD. As to expression, skeletal muscle, liver, stomach, lung, kidney and heart (at protein level). Strongly expressed in mammary and epithelial cells.

It localises to the cytoplasm. The protein resides in the membrane. It is found in the caveola. The protein localises to the cytosol. In terms of biological role, regulates the traffic and/or budding of caveolae. Plays a role in caveola formation in a tissue-specific manner. Required for the formation of caveolae in smooth muscle but not in the lung and heart endothelial cells. Regulates the equilibrium between cell surface-associated and cell surface-dissociated caveolae by promoting the rapid release of caveolae from the cell surface. Plays a role in the regulation of the circadian clock. Modulates the period length and phase of circadian gene expression and also regulates expression and interaction of the core clock components PER1/2 and CRY1/2. The sequence is that of Caveolae-associated protein 3 from Homo sapiens (Human).